The sequence spans 91 residues: MQRNLVVLLFLGMVALSSCGLREKHVQKLVKYAVPVGTLRTILQTVVHKVGKTQFGCPAYQGYCDDHCQDIKKEEGFCHGFKCKCGIPMGF.

The signal sequence occupies residues 1-19 (MQRNLVVLLFLGMVALSSC). Positions 20–27 (GLREKHVQ) are excised as a propeptide. The BetaSPN-type CS-alpha/beta domain maps to 54–91 (QFGCPAYQGYCDDHCQDIKKEEGFCHGFKCKCGIPMGF). Cystine bridges form between Cys-57/Cys-78, Cys-64/Cys-83, and Cys-68/Cys-85.

This sequence belongs to the long chain scorpion toxin family. Class 1 subfamily. Monomer (both chains). As to expression, expressed by the venom gland.

Its subcellular location is the secreted. In terms of biological role, inhibits voltage-gated potassium channels (Kv). Does not activate Kv7 channels. Peptide activator of Kv7.4/KCNQ4 channels. Also acts as a subtype-selective activator of channels formed by Kv7.3/KCNQ3, Kv7.2/Kv7.3 (KCNQ2/KCNQ3), Kv7.5/Kv7.3 (KCNQ3/KCNQ5) subunits. The chain is Potassium channel toxin AaTXK-beta from Androctonus australis (Sahara scorpion).